Consider the following 143-residue polypeptide: Peptide methionine sulfoxide reductase MsrB (143 aa).

Residues 5 to 126 (KEEKIKSLNR…NSAALRFVPK (122 aa)) form the MsrB domain. Cysteine 115 (nucleophile) is an active-site residue.

The protein belongs to the MsrB Met sulfoxide reductase family.

The enzyme catalyses L-methionyl-[protein] + [thioredoxin]-disulfide + H2O = L-methionyl-(R)-S-oxide-[protein] + [thioredoxin]-dithiol. The sequence is that of Peptide methionine sulfoxide reductase MsrB from Bacillus subtilis (strain 168).